Reading from the N-terminus, the 517-residue chain is Ribose import ATP-binding protein RbsA (517 aa).

2 consecutive ABC transporter domains span residues L11–D251 and Y263–T507. G43–S50 contacts ATP.

It belongs to the ABC transporter superfamily. Ribose importer (TC 3.A.1.2.1) family. The complex is composed of an ATP-binding protein (RbsA), two transmembrane proteins (RbsC) and a solute-binding protein (RbsB).

The protein localises to the cell inner membrane. The enzyme catalyses D-ribose(out) + ATP + H2O = D-ribose(in) + ADP + phosphate + H(+). In terms of biological role, part of the ABC transporter complex RbsABC involved in ribose import. Responsible for energy coupling to the transport system. The polypeptide is Ribose import ATP-binding protein RbsA (Burkholderia pseudomallei (strain K96243)).